The following is a 169-amino-acid chain: Crossover junction endodeoxyribonuclease RuvC (169 aa).

Residues aspartate 11, glutamate 71, and aspartate 143 contribute to the active site. Mg(2+)-binding residues include aspartate 11, glutamate 71, and aspartate 143.

Belongs to the RuvC family. Homodimer which binds Holliday junction (HJ) DNA. The HJ becomes 2-fold symmetrical on binding to RuvC with unstacked arms; it has a different conformation from HJ DNA in complex with RuvA. In the full resolvosome a probable DNA-RuvA(4)-RuvB(12)-RuvC(2) complex forms which resolves the HJ. Mg(2+) serves as cofactor.

The protein localises to the cytoplasm. It carries out the reaction Endonucleolytic cleavage at a junction such as a reciprocal single-stranded crossover between two homologous DNA duplexes (Holliday junction).. Its function is as follows. The RuvA-RuvB-RuvC complex processes Holliday junction (HJ) DNA during genetic recombination and DNA repair. Endonuclease that resolves HJ intermediates. Cleaves cruciform DNA by making single-stranded nicks across the HJ at symmetrical positions within the homologous arms, yielding a 5'-phosphate and a 3'-hydroxyl group; requires a central core of homology in the junction. The consensus cleavage sequence is 5'-(A/T)TT(C/G)-3'. Cleavage occurs on the 3'-side of the TT dinucleotide at the point of strand exchange. HJ branch migration catalyzed by RuvA-RuvB allows RuvC to scan DNA until it finds its consensus sequence, where it cleaves and resolves the cruciform DNA. The chain is Crossover junction endodeoxyribonuclease RuvC from Rhizobium etli (strain ATCC 51251 / DSM 11541 / JCM 21823 / NBRC 15573 / CFN 42).